Here is a 195-residue protein sequence, read N- to C-terminus: Imidazoleglycerol-phosphate dehydratase (195 aa).

Belongs to the imidazoleglycerol-phosphate dehydratase family.

The protein localises to the cytoplasm. It catalyses the reaction D-erythro-1-(imidazol-4-yl)glycerol 3-phosphate = 3-(imidazol-4-yl)-2-oxopropyl phosphate + H2O. It functions in the pathway amino-acid biosynthesis; L-histidine biosynthesis; L-histidine from 5-phospho-alpha-D-ribose 1-diphosphate: step 6/9. This is Imidazoleglycerol-phosphate dehydratase from Pelobacter propionicus (strain DSM 2379 / NBRC 103807 / OttBd1).